The following is a 512-amino-acid chain: ATP synthase subunit alpha, chloroplastic (512 aa).

170 to 177 (GDRQTGKT) contacts ATP.

This sequence belongs to the ATPase alpha/beta chains family. In terms of assembly, F-type ATPases have 2 components, CF(1) - the catalytic core - and CF(0) - the membrane proton channel. CF(1) has five subunits: alpha(3), beta(3), gamma(1), delta(1), epsilon(1). CF(0) has four main subunits: a, b, b' and c.

The protein resides in the plastid. It localises to the chloroplast thylakoid membrane. The enzyme catalyses ATP + H2O + 4 H(+)(in) = ADP + phosphate + 5 H(+)(out). Produces ATP from ADP in the presence of a proton gradient across the membrane. The alpha chain is a regulatory subunit. The chain is ATP synthase subunit alpha, chloroplastic from Staurastrum punctulatum (Green alga).